Here is a 333-residue protein sequence, read N- to C-terminus: Dihydroorotate dehydrogenase (quinone) (333 aa).

FMN contacts are provided by residues 56-60 (AGLDK) and T80. Residue K60 participates in substrate binding. 105-109 (NRMGF) serves as a coordination point for substrate. FMN is bound by residues N133 and N166. Residue N166 participates in substrate binding. Catalysis depends on S169, which acts as the Nucleophile. N171 contributes to the substrate binding site. The FMN site is built by K211 and T239. 240–241 (NT) is a substrate binding site. Residues G262, G291, and 312–313 (YS) contribute to the FMN site.

Belongs to the dihydroorotate dehydrogenase family. Type 2 subfamily. In terms of assembly, monomer. The cofactor is FMN.

The protein resides in the cell membrane. It catalyses the reaction (S)-dihydroorotate + a quinone = orotate + a quinol. Its pathway is pyrimidine metabolism; UMP biosynthesis via de novo pathway; orotate from (S)-dihydroorotate (quinone route): step 1/1. Catalyzes the conversion of dihydroorotate to orotate with quinone as electron acceptor. This Legionella pneumophila (strain Corby) protein is Dihydroorotate dehydrogenase (quinone).